A 134-amino-acid chain; its full sequence is U-scoloptoxin(05)-Er2a (134 aa).

The N-terminal stretch at methionine 1–proline 19 is a signal peptide.

Belongs to the scoloptoxin-05 family. In terms of processing, contains 5 disulfide bonds. In terms of tissue distribution, expressed by the venom gland.

It is found in the secreted. This is U-scoloptoxin(05)-Er2a from Ethmostigmus rubripes (Giant centipede).